A 461-amino-acid chain; its full sequence is Chromosomal replication initiator protein DnaA (461 aa).

A domain I, interacts with DnaA modulators region spans residues 1-83; sequence MDHSPWQRCL…LRFDVGSKPT (83 aa). The interval 83–124 is domain II; the sequence is TIDNSVTNSPVSRNTGGNESLFAKATSAPKVAEPESNIPKKT. The tract at residues 125 to 341 is domain III, AAA+ region; the sequence is NVRLNYTFEN…GALNRVIANA (217 aa). Positions 169, 171, 172, and 173 each coordinate ATP. The domain IV, binds dsDNA stretch occupies residues 342 to 461; it reads NFTGRAITID…YSNLIRTLSS (120 aa).

The protein belongs to the DnaA family. In terms of assembly, oligomerizes as a right-handed, spiral filament on DNA at oriC.

It localises to the cytoplasm. In terms of biological role, plays an essential role in the initiation and regulation of chromosomal replication. ATP-DnaA binds to the origin of replication (oriC) to initiate formation of the DNA replication initiation complex once per cell cycle. Binds the DnaA box (a 9 base pair repeat at the origin) and separates the double-stranded (ds)DNA. Forms a right-handed helical filament on oriC DNA; dsDNA binds to the exterior of the filament while single-stranded (ss)DNA is stabiized in the filament's interior. The ATP-DnaA-oriC complex binds and stabilizes one strand of the AT-rich DNA unwinding element (DUE), permitting loading of DNA polymerase. After initiation quickly degrades to an ADP-DnaA complex that is not apt for DNA replication. Binds acidic phospholipids. In Colwellia psychrerythraea (strain 34H / ATCC BAA-681) (Vibrio psychroerythus), this protein is Chromosomal replication initiator protein DnaA.